The following is a 251-amino-acid chain: Pyruvate formate-lyase-activating enzyme (251 aa).

In terms of domain architecture, Radical SAM core spans 15–244; sequence VDGPGLRYIL…KAAYRYVNFK (230 aa). [4Fe-4S] cluster contacts are provided by Cys-29, Cys-33, and Cys-36. S-adenosyl-L-methionine-binding positions include 35–37, Gly-79, 134–136, and His-207; these read YCH and DIK.

It belongs to the organic radical-activating enzymes family. [4Fe-4S] cluster serves as cofactor.

The protein localises to the cytoplasm. The catalysed reaction is glycyl-[formate C-acetyltransferase] + reduced [flavodoxin] + S-adenosyl-L-methionine = glycin-2-yl radical-[formate C-acetyltransferase] + semiquinone [flavodoxin] + 5'-deoxyadenosine + L-methionine + H(+). Activation of pyruvate formate-lyase under anaerobic conditions by generation of an organic free radical, using S-adenosylmethionine and reduced flavodoxin as cosubstrates to produce 5'-deoxy-adenosine. This Staphylococcus aureus (strain N315) protein is Pyruvate formate-lyase-activating enzyme (pflA).